A 476-amino-acid chain; its full sequence is Bifunctional protein HldE (476 aa).

The tract at residues 1-319 (MKVTLPAFEK…GALASHQGES (319 aa)) is ribokinase. Residue 195 to 198 (NMSE) participates in ATP binding. Residue Asp-264 is part of the active site. Residues 345–476 (MTNGCFDILH…SIIQNIMARQ (132 aa)) are cytidylyltransferase.

The protein in the N-terminal section; belongs to the carbohydrate kinase PfkB family. This sequence in the C-terminal section; belongs to the cytidylyltransferase family. Homodimer.

It catalyses the reaction D-glycero-beta-D-manno-heptose 7-phosphate + ATP = D-glycero-beta-D-manno-heptose 1,7-bisphosphate + ADP + H(+). The enzyme catalyses D-glycero-beta-D-manno-heptose 1-phosphate + ATP + H(+) = ADP-D-glycero-beta-D-manno-heptose + diphosphate. It functions in the pathway nucleotide-sugar biosynthesis; ADP-L-glycero-beta-D-manno-heptose biosynthesis; ADP-L-glycero-beta-D-manno-heptose from D-glycero-beta-D-manno-heptose 7-phosphate: step 1/4. Its pathway is nucleotide-sugar biosynthesis; ADP-L-glycero-beta-D-manno-heptose biosynthesis; ADP-L-glycero-beta-D-manno-heptose from D-glycero-beta-D-manno-heptose 7-phosphate: step 3/4. Catalyzes the phosphorylation of D-glycero-D-manno-heptose 7-phosphate at the C-1 position to selectively form D-glycero-beta-D-manno-heptose-1,7-bisphosphate. Its function is as follows. Catalyzes the ADP transfer from ATP to D-glycero-beta-D-manno-heptose 1-phosphate, yielding ADP-D-glycero-beta-D-manno-heptose. The protein is Bifunctional protein HldE of Shewanella denitrificans (strain OS217 / ATCC BAA-1090 / DSM 15013).